Reading from the N-terminus, the 332-residue chain is Eukaryotic translation initiation factor 3 subunit I (332 aa).

4 WD repeats span residues 8–47 (GHERALTQVKYNGDGDIIFSVSKDHVDADSHNGERIGTYH), 48–87 (GHQGALWTVDVNPDSTLLATGGADNTLRLWEVQTGKLLHT), 144–182 (DESKATVAGFSYLAKYIISGHEDGSVTQWDGKTGELLSS), and 279–318 (GHFGPLNYVAVHPQGTGYCSGGEDGYVRVHHFDKPYFDFM).

It belongs to the eIF-3 subunit I family. Component of the eukaryotic translation initiation factor 3 (eIF-3) complex.

The protein resides in the cytoplasm. In terms of biological role, component of the eukaryotic translation initiation factor 3 (eIF-3) complex, which is involved in protein synthesis of a specialized repertoire of mRNAs and, together with other initiation factors, stimulates binding of mRNA and methionyl-tRNAi to the 40S ribosome. The eIF-3 complex specifically targets and initiates translation of a subset of mRNAs involved in cell proliferation. This Phaeosphaeria nodorum (strain SN15 / ATCC MYA-4574 / FGSC 10173) (Glume blotch fungus) protein is Eukaryotic translation initiation factor 3 subunit I.